A 257-amino-acid polypeptide reads, in one-letter code: Phycoerythrobilin:ferredoxin oxidoreductase (257 aa).

It belongs to the HY2 family.

The catalysed reaction is (3Z)-phycoerythrobilin + oxidized 2[4Fe-4S]-[ferredoxin] = 15,16-dihydrobiliverdin + reduced 2[4Fe-4S]-[ferredoxin] + 2 H(+). In terms of biological role, catalyzes the two-electron reduction of the C2 and C3(1) diene system of 15,16-dihydrobiliverdin. The protein is Phycoerythrobilin:ferredoxin oxidoreductase of Synechococcus sp. (strain CC9902).